The following is a 61-amino-acid chain: Short neurotoxin 1 (61 aa).

Intrachain disulfides connect C3–C23, C17–C40, C42–C53, and C54–C59.

This sequence belongs to the three-finger toxin family. Short-chain subfamily. Type I alpha-neurotoxin sub-subfamily. Expressed by the venom gland.

It is found in the secreted. Its function is as follows. Binds to muscle nicotinic acetylcholine receptor (nAChR) and inhibit acetylcholine from binding to the receptor, thereby impairing neuromuscular transmission. The protein is Short neurotoxin 1 of Naja annulata annulata (Banded water cobra).